Reading from the N-terminus, the 349-residue chain is UDP-N-acetylenolpyruvoylglucosamine reductase (349 aa).

An FAD-binding PCMH-type domain is found at 25–197 (GIAATARYAA…VAVTFRLPKR (173 aa)). Arginine 173 is a catalytic residue. The Proton donor role is filled by serine 249. Residue glutamate 345 is part of the active site.

It belongs to the MurB family. It depends on FAD as a cofactor.

The protein localises to the cytoplasm. It carries out the reaction UDP-N-acetyl-alpha-D-muramate + NADP(+) = UDP-N-acetyl-3-O-(1-carboxyvinyl)-alpha-D-glucosamine + NADPH + H(+). The protein operates within cell wall biogenesis; peptidoglycan biosynthesis. Cell wall formation. This Burkholderia vietnamiensis (strain G4 / LMG 22486) (Burkholderia cepacia (strain R1808)) protein is UDP-N-acetylenolpyruvoylglucosamine reductase.